A 148-amino-acid polypeptide reads, in one-letter code: Protein Smg homolog (148 aa).

This sequence belongs to the Smg family.

This chain is Protein Smg homolog, found in Thiobacillus denitrificans (strain ATCC 25259 / T1).